Reading from the N-terminus, the 241-residue chain is Thiamine import ATP-binding protein ThiQ (241 aa).

The ABC transporter domain maps to 2 to 239; sequence IQLDKLNHCY…PKDEVLIQYL (238 aa). 41 to 48 serves as a coordination point for ATP; the sequence is GPSGAGKS.

Belongs to the ABC transporter superfamily. Thiamine importer (TC 3.A.1.19.1) family. In terms of assembly, the complex is composed of two ATP-binding proteins (ThiQ), two transmembrane proteins (ThiP) and a solute-binding protein (ThiB).

Its subcellular location is the cell inner membrane. It carries out the reaction thiamine(out) + ATP + H2O = thiamine(in) + ADP + phosphate + H(+). Its function is as follows. Part of the ABC transporter complex ThiBPQ involved in thiamine import. Responsible for energy coupling to the transport system. The chain is Thiamine import ATP-binding protein ThiQ from Photobacterium profundum (strain SS9).